The primary structure comprises 177 residues: ECF RNA polymerase sigma factor SigL (177 aa).

Positions 18-85 are sigma-70 factor domain-2; that stretch reads LYDEHAAVLW…MIIDERRSAR (68 aa). Residues 42-45 carry the Interaction with polymerase core subunit RpoC motif; the sequence is DVVQ. The sigma-70 factor domain-4 stretch occupies residues 119-167; it reads ALAQLSAEHRAVIQRSYYRGWSTAQIATDLGIAEGTVKSRLHYAVRALR. A DNA-binding region (H-T-H motif) is located at residues 141-160; that stretch reads TAQIATDLGIAEGTVKSRLH.

It belongs to the sigma-70 factor family. ECF subfamily. Interacts transiently with the RNA polymerase catalytic core formed by RpoA, RpoB, RpoC and RpoZ (2 alpha, 1 beta, 1 beta' and 1 omega subunit) to form the RNA polymerase holoenzyme that can initiate transcription. Interacts (via sigma-70 factor domain 4) with anti-sigma-L factor RslA.

Its function is as follows. Sigma factors are initiation factors that promote the attachment of RNA polymerase to specific initiation sites and are then released. Extracytoplasmic function (ECF) sigma factors are held in an inactive form by an anti-sigma factor until released by regulated intramembrane proteolysis. In Mycobacterium tuberculosis (strain ATCC 35801 / TMC 107 / Erdman), this protein is ECF RNA polymerase sigma factor SigL (sigL).